The primary structure comprises 450 residues: MYTKDTIVAIATPQGNGGIGIIRISGIDALEIAEKLTKKQLKPRYATFCNVYNDNEIIDHGIVIFFKAPLSYTGEDVVEIQAHGNPFILNLIIKAALNCGARIAKAGEFTERAFLNNKLDLAQAEAVADIINASSEIAAKSAAKSLQGDFSKEINNLLEKLIYLRMYVEASIDFPEEEINFLEDQKIHSSLEEIYKVILAIKNSCKQGVILAEGITLILVGKPNAGKSSLLNALAGKESAIVTSIAGTTRDIVKEHIQINGVPMHIIDTAGLRNSDDIIESEGIKRAIKKIQEADQVLFVTDDYTNSQVKFSDIKEIIPEFYDQIPKDIDITYVHNKIDLLKEVPHNHANHIYISAENNIGIDKLKEHILNKVGYTNQNESIYTARERHVTAINNAFEHIKLAKEQLELGNGELLAEELLIVQEYLNSITGEFSSDDLLGEIFSSFCIGK.

(6S)-5-formyl-5,6,7,8-tetrahydrofolate contacts are provided by arginine 23, glutamate 79, and lysine 118. A TrmE-type G domain is found at 214–374 (GITLILVGKP…LKEHILNKVG (161 aa)). Asparagine 224 lines the K(+) pocket. Residues 224–229 (NAGKSS), 243–249 (TSIAGTT), and 268–271 (DTAG) contribute to the GTP site. Serine 228 lines the Mg(2+) pocket. Residues threonine 243, isoleucine 245, and threonine 248 each contribute to the K(+) site. Threonine 249 provides a ligand contact to Mg(2+). (6S)-5-formyl-5,6,7,8-tetrahydrofolate is bound at residue lysine 450.

This sequence belongs to the TRAFAC class TrmE-Era-EngA-EngB-Septin-like GTPase superfamily. TrmE GTPase family. Homodimer. Heterotetramer of two MnmE and two MnmG subunits. K(+) is required as a cofactor.

Its subcellular location is the cytoplasm. Its function is as follows. Exhibits a very high intrinsic GTPase hydrolysis rate. Involved in the addition of a carboxymethylaminomethyl (cmnm) group at the wobble position (U34) of certain tRNAs, forming tRNA-cmnm(5)s(2)U34. This chain is tRNA modification GTPase MnmE, found in Francisella tularensis subsp. holarctica (strain OSU18).